The sequence spans 77 residues: UPF0349 protein lwe2340 (77 aa).

Belongs to the UPF0349 family.

The protein is UPF0349 protein lwe2340 of Listeria welshimeri serovar 6b (strain ATCC 35897 / DSM 20650 / CCUG 15529 / CIP 8149 / NCTC 11857 / SLCC 5334 / V8).